The primary structure comprises 90 residues: Small ribosomal subunit protein uS15 (90 aa).

It belongs to the universal ribosomal protein uS15 family. Part of the 30S ribosomal subunit. Forms a bridge to the 50S subunit in the 70S ribosome, contacting the 23S rRNA.

One of the primary rRNA binding proteins, it binds directly to 16S rRNA where it helps nucleate assembly of the platform of the 30S subunit by binding and bridging several RNA helices of the 16S rRNA. Its function is as follows. Forms an intersubunit bridge (bridge B4) with the 23S rRNA of the 50S subunit in the ribosome. The sequence is that of Small ribosomal subunit protein uS15 from Campylobacter hominis (strain ATCC BAA-381 / DSM 21671 / CCUG 45161 / LMG 19568 / NCTC 13146 / CH001A).